We begin with the raw amino-acid sequence, 59 residues long: Large ribosomal subunit protein uL30 (59 aa).

It belongs to the universal ribosomal protein uL30 family. In terms of assembly, part of the 50S ribosomal subunit.

The polypeptide is Large ribosomal subunit protein uL30 (Buchnera aphidicola subsp. Schizaphis graminum (strain Sg)).